A 106-amino-acid polypeptide reads, in one-letter code: ATP-dependent Clp protease adapter protein ClpS (106 aa).

Belongs to the ClpS family. In terms of assembly, binds to the N-terminal domain of the chaperone ClpA.

Its function is as follows. Involved in the modulation of the specificity of the ClpAP-mediated ATP-dependent protein degradation. This Salmonella gallinarum (strain 287/91 / NCTC 13346) protein is ATP-dependent Clp protease adapter protein ClpS.